The following is a 229-amino-acid chain: Potassium/proton antiporter CemA (229 aa).

The next 3 membrane-spanning stretches (helical) occupy residues 7-27 (LTPF…SLSF), 106-126 (IVLH…YYFL), and 189-209 (IISG…KYWI).

The protein belongs to the CemA family.

Its subcellular location is the plastid. It is found in the chloroplast inner membrane. It catalyses the reaction K(+)(in) + H(+)(out) = K(+)(out) + H(+)(in). Functionally, contributes to K(+)/H(+) antiport activity by supporting proton efflux to control proton extrusion and homeostasis in chloroplasts in a light-dependent manner to modulate photosynthesis. Prevents excessive induction of non-photochemical quenching (NPQ) under continuous-light conditions. Indirectly promotes efficient inorganic carbon uptake into chloroplasts. In Calycanthus floridus var. glaucus (Eastern sweetshrub), this protein is Potassium/proton antiporter CemA.